A 384-amino-acid polypeptide reads, in one-letter code: Probable RNA 3'-terminal phosphate cyclase-like protein (384 aa).

This sequence belongs to the RNA 3'-terminal cyclase family. Type 2 subfamily. Part of the small subunit (SSU) processome, composed of more than 70 proteins and the RNA chaperone small nucleolar RNA (snoRNA) U3.

The protein localises to the nucleus. It is found in the nucleolus. Its function is as follows. Part of the small subunit (SSU) processome, first precursor of the small eukaryotic ribosomal subunit. During the assembly of the SSU processome in the nucleolus, many ribosome biogenesis factors, an RNA chaperone and ribosomal proteins associate with the nascent pre-rRNA and work in concert to generate RNA folding, modifications, rearrangements and cleavage as well as targeted degradation of pre-ribosomal RNA by the RNA exosome. Does not have cyclase activity. The protein is Probable RNA 3'-terminal phosphate cyclase-like protein (Rtc1) of Drosophila melanogaster (Fruit fly).